Consider the following 80-residue polypeptide: Trefoil factor 3 (80 aa).

The first 21 residues, 1–21 (MEARVLWLLALVLALGSSSLA), serve as a signal peptide directing secretion. The 44-residue stretch at 30 to 73 (NLCAVPAKNRVDCGYPEISPEQCVNRGCCFDSSIPEVPWCFKPL) folds into the P-type domain. Intrachain disulfides connect Cys32–Cys58, Cys42–Cys57, and Cys52–Cys69.

As to quaternary structure, monomer. Homodimer; disulfide-linked.

It localises to the secreted. The protein localises to the extracellular space. The protein resides in the extracellular matrix. Its subcellular location is the cytoplasm. Functionally, involved in the maintenance and repair of the intestinal mucosa. Promotes the mobility of epithelial cells in healing processes (motogen). This Felis catus (Cat) protein is Trefoil factor 3 (TFF3).